Here is a 520-residue protein sequence, read N- to C-terminus: Cytochrome b5 reductase 4 (520 aa).

M1 carries the post-translational modification N-acetylmethionine. The span at M1–Q16 shows a compositional bias: low complexity. Residues M1 to P27 are disordered. One can recognise a Cytochrome b5 heme-binding domain in the interval L54–A130. Heme contacts are provided by H89 and H112. A CS domain is found at P164–G255. Positions L272 to S384 constitute an FAD-binding FR-type domain. FAD is bound by residues D364–G379 and D391–L423.

This sequence belongs to the flavoprotein pyridine nucleotide cytochrome reductase family. It depends on FAD as a cofactor.

Its subcellular location is the endoplasmic reticulum. The enzyme catalyses 2 Fe(III)-[cytochrome b5] + NADH = 2 Fe(II)-[cytochrome b5] + NAD(+) + H(+). In terms of biological role, NADH-cytochrome b5 reductase involved in endoplasmic reticulum stress response pathway. Plays a critical role in protecting pancreatic beta-cells against oxidant stress, possibly by protecting the cell from excess buildup of reactive oxygen species (ROS). In Bos taurus (Bovine), this protein is Cytochrome b5 reductase 4 (CYB5R4).